Consider the following 117-residue polypeptide: UPF0122 protein Cthe_0771 (117 aa).

The protein belongs to the UPF0122 family.

In terms of biological role, might take part in the signal recognition particle (SRP) pathway. This is inferred from the conservation of its genetic proximity to ftsY/ffh. May be a regulatory protein. The polypeptide is UPF0122 protein Cthe_0771 (Acetivibrio thermocellus (strain ATCC 27405 / DSM 1237 / JCM 9322 / NBRC 103400 / NCIMB 10682 / NRRL B-4536 / VPI 7372) (Clostridium thermocellum)).